A 222-amino-acid polypeptide reads, in one-letter code: Deoxyribose-phosphate aldolase (222 aa).

The active-site Proton donor/acceptor is aspartate 89. The active-site Schiff-base intermediate with acetaldehyde is lysine 152. Lysine 181 serves as the catalytic Proton donor/acceptor.

Belongs to the DeoC/FbaB aldolase family. DeoC type 1 subfamily.

It is found in the cytoplasm. It carries out the reaction 2-deoxy-D-ribose 5-phosphate = D-glyceraldehyde 3-phosphate + acetaldehyde. Its pathway is carbohydrate degradation; 2-deoxy-D-ribose 1-phosphate degradation; D-glyceraldehyde 3-phosphate and acetaldehyde from 2-deoxy-alpha-D-ribose 1-phosphate: step 2/2. Functionally, catalyzes a reversible aldol reaction between acetaldehyde and D-glyceraldehyde 3-phosphate to generate 2-deoxy-D-ribose 5-phosphate. The polypeptide is Deoxyribose-phosphate aldolase (Alkaliphilus oremlandii (strain OhILAs) (Clostridium oremlandii (strain OhILAs))).